A 465-amino-acid polypeptide reads, in one-letter code: Antithrombin-III (465 aa).

Residues methionine 1–cysteine 32 form the signal peptide. 2 cysteine pairs are disulfide-bonded: cysteine 41–cysteine 161 and cysteine 54–cysteine 128. Position 64 is a phosphothreonine (threonine 64). Serine 69 is subject to Phosphoserine. Tryptophan 82 lines the heparin pocket. The N-linked (GlcNAc...) asparagine glycan is linked to asparagine 129. Arginine 162 lines the heparin pocket. A glycan (N-linked (GlcNAc...) asparagine) is linked at asparagine 168. Arginine 178 serves as a coordination point for heparin. Asparagine 188 and asparagine 225 each carry an N-linked (GlcNAc...) asparagine glycan. A disulfide bridge links cysteine 280 with cysteine 463.

The protein belongs to the serpin family. Forms protease inhibiting heterodimer with TMPRSS7. In terms of processing, phosphorylated by FAM20C in the extracellular medium. As to expression, plasma.

It localises to the secreted. The protein localises to the extracellular space. In terms of biological role, most important serine protease inhibitor in plasma that regulates the blood coagulation cascade. AT-III inhibits thrombin, matriptase-3/TMPRSS7, as well as factors IXa, Xa and XIa. Its inhibitory activity is greatly enhanced in the presence of heparin. The protein is Antithrombin-III (SERPINC1) of Ovis aries (Sheep).